A 206-amino-acid polypeptide reads, in one-letter code: Ribosomal RNA small subunit methyltransferase G (206 aa).

Residues Gly74, Leu79, 125-126 (VE), and Arg140 contribute to the S-adenosyl-L-methionine site.

Belongs to the methyltransferase superfamily. RNA methyltransferase RsmG family.

The protein localises to the cytoplasm. It carries out the reaction guanosine(527) in 16S rRNA + S-adenosyl-L-methionine = N(7)-methylguanosine(527) in 16S rRNA + S-adenosyl-L-homocysteine. In terms of biological role, specifically methylates the N7 position of guanine in position 527 of 16S rRNA. The protein is Ribosomal RNA small subunit methyltransferase G of Shewanella woodyi (strain ATCC 51908 / MS32).